Here is a 328-residue protein sequence, read N- to C-terminus: C-type lectin domain family 4 member K (328 aa).

The Cytoplasmic segment spans residues 1–43 (MTVEKEAPDAHFTVDKQNISLWPREPPPKSGPSLVPGKTPTVR). The helical; Signal-anchor for type II membrane protein transmembrane segment at 44–64 (AALICLTLVLVASVLLQAVLY) threads the bilayer. The Extracellular portion of the chain corresponds to 65–328 (PRFMGTISDV…CKRPYVPSEP (264 aa)). N-linked (GlcNAc...) asparagine glycans are attached at residues asparagine 87, asparagine 113, and asparagine 180. Positions 145–190 (EEVSTLNAQIPELKSDLEKASALNTKIRALQGSLENMSKLLKRQND) form a coiled coil. The region spanning 202 to 320 (FKGNFYYFSL…CDKTFLFICK (119 aa)) is the C-type lectin domain. 2 disulfides stabilise this stretch: cysteine 223-cysteine 319 and cysteine 295-cysteine 311.

In terms of assembly, homotrimer. In terms of tissue distribution, exclusively expressed by Langerhans cells. Expressed in astrocytoma and malignant ependymoma, but not in normal brain tissues.

It localises to the membrane. Functionally, calcium-dependent lectin displaying mannose-binding specificity. Induces the formation of Birbeck granules (BGs); is a potent regulator of membrane superimposition and zippering. Binds to sulfated as well as mannosylated glycans, keratan sulfate (KS) and beta-glucans. Facilitates uptake of antigens and is involved in the routing and/or processing of antigen for presentation to T cells. Major receptor on primary Langerhans cells for Candida species, Saccharomyces species, and Malassezia furfur. Protects against human immunodeficiency virus-1 (HIV-1) infection. Binds to high-mannose structures present on the envelope glycoprotein which is followed by subsequent targeting of the virus to the Birbeck granules leading to its rapid degradation. In Homo sapiens (Human), this protein is C-type lectin domain family 4 member K (CD207).